A 274-amino-acid polypeptide reads, in one-letter code: S-methyl-5'-thioadenosine phosphorylase (274 aa).

Phosphate is bound by residues Ser20, 62–63 (RH), and 95–96 (SA). Met194 lines the substrate pocket. Thr195 contributes to the phosphate binding site. Substrate is bound at residue 218 to 220 (DYD).

Belongs to the PNP/MTAP phosphorylase family. MTAP subfamily. In terms of assembly, homohexamer. Dimer of a homotrimer.

It carries out the reaction S-methyl-5'-thioadenosine + phosphate = 5-(methylsulfanyl)-alpha-D-ribose 1-phosphate + adenine. Its pathway is amino-acid biosynthesis; L-methionine biosynthesis via salvage pathway; S-methyl-5-thio-alpha-D-ribose 1-phosphate from S-methyl-5'-thioadenosine (phosphorylase route): step 1/1. Catalyzes the reversible phosphorylation of S-methyl-5'-thioadenosine (MTA) to adenine and 5-methylthioribose-1-phosphate. Involved in the breakdown of MTA, a major by-product of polyamine biosynthesis. Responsible for the first step in the methionine salvage pathway after MTA has been generated from S-adenosylmethionine. Has broad substrate specificity with 6-aminopurine nucleosides as preferred substrates. This chain is S-methyl-5'-thioadenosine phosphorylase, found in Hyperthermus butylicus (strain DSM 5456 / JCM 9403 / PLM1-5).